The sequence spans 370 residues: MASRKLLLLPGDGIGPEAMAEVRKVIAFLNSDLNLGFETEEGLVGGCAYDAHGQAISDADMEKALAADSVLFGAVGGPKWDSVPYEVRPEAGLLRLRKDMQLYANLRPAICYPALAHSSSLKPEVIEGLDILILRELTGGVYFGEPKEIIDLGNGQKRGIDTQVYDTYEIERIADVAFELARTRRNKVTSMEKRNVMKSGVLWNQGVTARHKEKHADVQLEHMLADAGGMQLVRWPKQFDVILTDNLFGDLLSDVAAMLTGSLGMLPSASLGAADSKTGKRKALYEPVHGSAPDIAGKGIANPIAMIASLAMCLRYSFGLVAEADRLEAAIAGVLDDGIRTADIWSEGNTKVGTTEMGDAILAKFKALSA.

NAD(+) is bound at residue G77–E90. The substrate site is built by R97, R107, R135, and D226. Mg(2+) is bound by residues D226, D250, and D254. G290 to N302 contributes to the NAD(+) binding site.

The protein belongs to the isocitrate and isopropylmalate dehydrogenases family. LeuB type 1 subfamily. In terms of assembly, homodimer. Mg(2+) serves as cofactor. Mn(2+) is required as a cofactor.

It is found in the cytoplasm. It carries out the reaction (2R,3S)-3-isopropylmalate + NAD(+) = 4-methyl-2-oxopentanoate + CO2 + NADH. Its pathway is amino-acid biosynthesis; L-leucine biosynthesis; L-leucine from 3-methyl-2-oxobutanoate: step 3/4. In terms of biological role, catalyzes the oxidation of 3-carboxy-2-hydroxy-4-methylpentanoate (3-isopropylmalate) to 3-carboxy-4-methyl-2-oxopentanoate. The product decarboxylates to 4-methyl-2 oxopentanoate. This chain is 3-isopropylmalate dehydrogenase, found in Brucella abortus (strain 2308).